The chain runs to 216 residues: Regulator of G-protein signaling 19 (216 aa).

A compositionally biased stretch (basic and acidic residues) spans 1–19 (MPTPHEAEKQHTGPEEADR). The tract at residues 1-30 (MPTPHEAEKQHTGPEEADRPPSMSSHDAAP) is disordered. Ser24 and Ser97 each carry phosphoserine. An RGS domain is found at 90-206 (SFDKLMHSPT…LTSPTYRSLL (117 aa)). Residue Ser151 is modified to Phosphoserine; by MAPK1 and MAPK3. The tract at residues 207 to 216 (LQGAPQSSEA) is interaction with GIPC.

Interacts with GIPC PDZ domain. Interacts with GNAO1. In terms of processing, fatty acylated. Heavily palmitoylated in the cysteine string motif. Post-translationally, phosphorylated, mainly on serine residues.

The protein localises to the membrane. Inhibits signal transduction by increasing the GTPase activity of G protein alpha subunits thereby driving them into their inactive GDP-bound form. Binds to G-alpha subfamily 1 members, with the order G(i)a3 &gt; G(i)a1 &gt; G(o)a &gt;&gt; G(z)a/G(i)a2. Activity on G(z)-alpha is inhibited by phosphorylation and palmitoylation of the G-protein. This Mus musculus (Mouse) protein is Regulator of G-protein signaling 19 (Rgs19).